A 90-amino-acid chain; its full sequence is Small ribosomal subunit protein bS16 (90 aa).

It belongs to the bacterial ribosomal protein bS16 family.

This Anoxybacillus flavithermus (strain DSM 21510 / WK1) protein is Small ribosomal subunit protein bS16.